A 414-amino-acid chain; its full sequence is TAR DNA-binding protein 43 (414 aa).

2 consecutive RRM domains span residues 104 to 200 (SDLI…RCTE) and 191 to 262 (RKVF…NAEP). The segment covering 261 to 274 (EPKHNSNRQLERGG) has biased composition (basic and acidic residues). Disordered regions lie at residues 261-303 (EPKH…GNNQ) and 341-373 (ASQQNQSGPSGNNQPQGNMQREQNQGFSSGNNS). Over residues 275–303 (RFGGNPGGFGNQGGFGNSRGGGGGLGNNQ) the composition is skewed to gly residues. Residues 342-373 (SQQNQSGPSGNNQPQGNMQREQNQGFSSGNNS) show a composition bias toward low complexity.

Homodimer.

It localises to the nucleus. The protein resides in the cytoplasm. Its subcellular location is the stress granule. The protein localises to the mitochondrion. Functionally, probably involved in transcriptional repression. May play a role in the maintenance of the circadian clock periodicity. This chain is TAR DNA-binding protein 43 (TARDBP), found in Gallus gallus (Chicken).